Reading from the N-terminus, the 792-residue chain is MKFSENWLRNHVPIQANRDVLVATLTAIGLEVENVAVLGEALDLIVVARIVNVVPHPESDRLQICQVDAAQDTLLQIVCGASNVRPGLVVPLALLGAKIGALTIKSTTLRGVESNGMLCSAKELGLDTEASGLMELPDDAPIGTPLADYLALPDASIEIKLTPNRADCFSVRGIAFDVAAACASEVTPLHIDEIPAVSARTLPVELHAGANAPRYCGCVIEGIDPAAPTPVWMAERLRRSGIRPVSLLVDITQYVMLELGQPMHAFDVDTLRGPIGVRLSRNDEALKLLDGRTVVLDNDFLVVTDADQPIALAGLIGGWETRITDTTVNVFLEAAHFAPVAIMGRGRKLGLHTDASHRFERGVDPALPPQAIAFATRLILELAGGKPGSLIRVELPEYLPAPASILLRRTRIARLLGIVIDDVEVERILHALGMQVTTQAEGWRVVAPSRRFDIAIEEDLIEELVRIRGYEHLPTALPIGASHIAMPSETRLDMTSVRRQLIARELQETINYAFIDAELLRRWQLNTGQVMLMNPLSAELAVIRPRLLPGLVAALGRNIARQLERVRLFELGNVFTASDEAGAAPLETQHVAAAVCGDAFALQWGEQARKVDFYDLKGDLESLAAASGAVLTFHSSAQPWGHPGRSADVWCDDTCIGWIGQLHPALTQTLEINVDVIAFELALEPLVRGALPRAHALSRFPFVRRDLACVVPEHVTWSELAITVRDVIGSLLRDVKLFDRYVGKGIEPGFKSLAIGLILQDDTRTLIDRDVDDIMAKVVMAIQQRHDVRIRS.

The 109-residue stretch at 39–147 (GEALDLIVVA…DDAPIGTPLA (109 aa)) folds into the tRNA-binding domain. In terms of domain architecture, B5 spans 400–475 (PAPASILLRR…RIRGYEHLPT (76 aa)). Mg(2+)-binding residues include Asp-453, Asp-459, Glu-462, and Glu-463. The FDX-ACB domain maps to 698–791 (SRFPFVRRDL…IQQRHDVRIR (94 aa)).

Belongs to the phenylalanyl-tRNA synthetase beta subunit family. Type 1 subfamily. In terms of assembly, tetramer of two alpha and two beta subunits. Requires Mg(2+) as cofactor.

The protein resides in the cytoplasm. It catalyses the reaction tRNA(Phe) + L-phenylalanine + ATP = L-phenylalanyl-tRNA(Phe) + AMP + diphosphate + H(+). This is Phenylalanine--tRNA ligase beta subunit (pheT) from Xylella fastidiosa (strain 9a5c).